Consider the following 297-residue polypeptide: Carbamate kinase (297 aa).

Belongs to the carbamate kinase family.

It localises to the cytoplasm. The enzyme catalyses hydrogencarbonate + NH4(+) + ATP = carbamoyl phosphate + ADP + H2O + H(+). The catalysed reaction is carbamate + ATP = carbamoyl phosphate + ADP. It carries out the reaction hydrogencarbonate + NH4(+) = carbamate + H2O + H(+). It participates in nitrogen metabolism; (S)-allantoin degradation. Kinase involved in the anaerobic nitrogen utilization via the assimilation of allantoin. Catalyzes the transfer of a phosphate group from carbamoyl phosphate to ADP to produce ATP and leave carbamate, which spontaneously hydrolyzes to ammonia and hydrogencarbonate. The protein is Carbamate kinase of Escherichia coli (strain K12).